A 938-amino-acid chain; its full sequence is Isoleucine--tRNA ligase (938 aa).

Residues 61–71 carry the 'HIGH' region motif; the sequence is PYANGDIHLGT. Glu559 serves as a coordination point for L-isoleucyl-5'-AMP. A 'KMSKS' region motif is present at residues 601–605; it reads KMSKS. Position 604 (Lys604) interacts with ATP. Cys904, Cys907, Cys923, and Cys926 together coordinate Zn(2+).

It belongs to the class-I aminoacyl-tRNA synthetase family. IleS type 1 subfamily. As to quaternary structure, monomer. The cofactor is Zn(2+).

The protein resides in the cytoplasm. The enzyme catalyses tRNA(Ile) + L-isoleucine + ATP = L-isoleucyl-tRNA(Ile) + AMP + diphosphate. Its function is as follows. Catalyzes the attachment of isoleucine to tRNA(Ile). As IleRS can inadvertently accommodate and process structurally similar amino acids such as valine, to avoid such errors it has two additional distinct tRNA(Ile)-dependent editing activities. One activity is designated as 'pretransfer' editing and involves the hydrolysis of activated Val-AMP. The other activity is designated 'posttransfer' editing and involves deacylation of mischarged Val-tRNA(Ile). The protein is Isoleucine--tRNA ligase of Symbiobacterium thermophilum (strain DSM 24528 / JCM 14929 / IAM 14863 / T).